The following is a 261-amino-acid chain: Small ribosomal subunit protein uS2 (261 aa).

Ser2 bears the N-acetylserine mark. The interval 215–261 is disordered; it reads AEEAKTTEDVEEAAPVDADEWTGETEEVDWAESGATPAVEDAAASNW. A compositionally biased stretch (acidic residues) spans 223-244; it reads DVEEAAPVDADEWTGETEEVDW.

It belongs to the universal ribosomal protein uS2 family. Component of the small ribosomal subunit. Mature ribosomes consist of a small (40S) and a large (60S) subunit. The 40S subunit contains about 33 different proteins and 1 molecule of RNA (18S). The 60S subunit contains about 49 different proteins and 3 molecules of RNA (25S, 5.8S and 5S). Interacts with RPS21.

The protein localises to the cytoplasm. Functionally, required for the assembly and/or stability of the 40S ribosomal subunit. Required for the processing of the 20S rRNA-precursor to mature 18S rRNA in a late step of the maturation of 40S ribosomal subunits. The polypeptide is Small ribosomal subunit protein uS2 (Scheffersomyces stipitis (strain ATCC 58785 / CBS 6054 / NBRC 10063 / NRRL Y-11545) (Yeast)).